Here is a 352-residue protein sequence, read N- to C-terminus: UDP-N-acetylglucosamine--N-acetylmuramyl-(pentapeptide) pyrophosphoryl-undecaprenol N-acetylglucosamine transferase (352 aa).

UDP-N-acetyl-alpha-D-glucosamine contacts are provided by residues 12-14 (TGG), Asn-124, Arg-160, Ser-188, and Gln-287.

Belongs to the glycosyltransferase 28 family. MurG subfamily.

It is found in the cell inner membrane. It catalyses the reaction di-trans,octa-cis-undecaprenyl diphospho-N-acetyl-alpha-D-muramoyl-L-alanyl-D-glutamyl-meso-2,6-diaminopimeloyl-D-alanyl-D-alanine + UDP-N-acetyl-alpha-D-glucosamine = di-trans,octa-cis-undecaprenyl diphospho-[N-acetyl-alpha-D-glucosaminyl-(1-&gt;4)]-N-acetyl-alpha-D-muramoyl-L-alanyl-D-glutamyl-meso-2,6-diaminopimeloyl-D-alanyl-D-alanine + UDP + H(+). The protein operates within cell wall biogenesis; peptidoglycan biosynthesis. In terms of biological role, cell wall formation. Catalyzes the transfer of a GlcNAc subunit on undecaprenyl-pyrophosphoryl-MurNAc-pentapeptide (lipid intermediate I) to form undecaprenyl-pyrophosphoryl-MurNAc-(pentapeptide)GlcNAc (lipid intermediate II). The polypeptide is UDP-N-acetylglucosamine--N-acetylmuramyl-(pentapeptide) pyrophosphoryl-undecaprenol N-acetylglucosamine transferase (Dechloromonas aromatica (strain RCB)).